The sequence spans 118 residues: MALSPRDTTKRRAQRVRTRLRKVANGRPRLSVFRSAKNIYAQVIDDERGVTLAAASSLEGEKKDKGSDKDAAARVGALVAQRAIEKGVKDVVFDRGGYLYHGRVKALADAAREAGLNF.

It belongs to the universal ribosomal protein uL18 family. As to quaternary structure, part of the 50S ribosomal subunit; part of the 5S rRNA/L5/L18/L25 subcomplex. Contacts the 5S and 23S rRNAs.

In terms of biological role, this is one of the proteins that bind and probably mediate the attachment of the 5S RNA into the large ribosomal subunit, where it forms part of the central protuberance. This chain is Large ribosomal subunit protein uL18, found in Phenylobacterium zucineum (strain HLK1).